The sequence spans 381 residues: Creatine kinase B-type (381 aa).

Ser4 carries the post-translational modification Phosphoserine. The 88-residue stretch at 11 to 98 folds into the Phosphagen kinase N-terminal domain; that stretch reads KLRFPAEDEF…FDPIIEDRHG (88 aa). A Phosphothreonine modification is found at Thr35. Lys45 participates in a covalent cross-link: Glycyl lysine isopeptide (Lys-Gly) (interchain with G-Cter in ubiquitin). Val72 contributes to the creatine binding site. A compositionally biased stretch (basic and acidic residues) spans 96–110; sequence RHGGYKPSDEHKTDL. The disordered stretch occupies residues 96 to 122; that stretch reads RHGGYKPSDEHKTDLNPDNLQGGDDLD. Residues Lys101 and Lys107 each participate in a glycyl lysine isopeptide (Lys-Gly) (interchain with G-Cter in ubiquitin) cross-link. The residue at position 125 (Tyr125) is a Phosphotyrosine. A Phosphagen kinase C-terminal domain is found at 125-367; the sequence is YVLSSRVRTG…KLLIEMEQRL (243 aa). Residues 128-132, Arg130, Arg132, and His191 each bind ATP; that span reads SSRVR. The internal MTS-like signal stretch occupies residues 130–138; sequence RVRTGRSIR. Position 199 is a phosphoserine (Ser199). Glu232 serves as a coordination point for creatine. Arg236 serves as a coordination point for ATP. Tyr269 is subject to 3'-nitrotyrosine. Residue Ser285 participates in creatine binding. Arg292 is a binding site for ATP. Position 309 is a phosphoserine (Ser309). ATP contacts are provided by residues Arg320, 320–325, and Asp335; that span reads RGTGGV. Position 322 is a phosphothreonine (Thr322). Residue Lys381 forms a Glycyl lysine isopeptide (Lys-Gly) (interchain with G-Cter in ubiquitin) linkage.

Belongs to the ATP:guanido phosphotransferase family. Dimer of identical or non-identical chains, which can be either B (brain type) or M (muscle type). With MM being the major form in skeletal muscle and myocardium, MB existing in myocardium, and BB existing in many tissues, especially brain. Interacts with SLC12A6 (via C-terminus); the interaction may be required for SLC12A6 potassium-chloride cotransport activity. Ubiquitinated by the ECS(ASB9) complex, leading to its degradation by the proteasome.

The protein resides in the cytoplasm. It is found in the cytosol. Its subcellular location is the mitochondrion. The protein localises to the cell membrane. It carries out the reaction creatine + ATP = N-phosphocreatine + ADP + H(+). In terms of biological role, reversibly catalyzes the transfer of phosphate between ATP and various phosphogens (e.g. creatine phosphate). Creatine kinase isoenzymes play a central role in energy transduction in tissues with large, fluctuating energy demands, such as skeletal muscle, heart, brain and spermatozoa. Acts as a key regulator of adaptive thermogenesis as part of the futile creatine cycle: localizes to the mitochondria of thermogenic fat cells and acts by mediating phosphorylation of creatine to initiate a futile cycle of creatine phosphorylation and dephosphorylation. During the futile creatine cycle, creatine and N-phosphocreatine are in a futile cycle, which dissipates the high energy charge of N-phosphocreatine as heat without performing any mechanical or chemical work. This Homo sapiens (Human) protein is Creatine kinase B-type.